A 227-amino-acid polypeptide reads, in one-letter code: Cytochrome c oxidase subunit 2 (227 aa).

Topologically, residues 1–14 (MAYPFQLGLQDATS) are mitochondrial intermembrane. Residues 15 to 45 (PIMEELMNFHDHTLMIVFLISSLVLYIISLM) form a helical membrane-spanning segment. Residues 46–59 (LTTKLTHTSTMDAQ) are Mitochondrial matrix-facing. A helical transmembrane segment spans residues 60-87 (EVETIWTILPAAILILIALPSLRILYMM). Over 88 to 227 (DEINNPVLTV…YFENWSASMI (140 aa)) the chain is Mitochondrial intermembrane. Residues His161, Cys196, Glu198, Cys200, His204, and Met207 each coordinate Cu cation. Glu198 is a binding site for Mg(2+).

The protein belongs to the cytochrome c oxidase subunit 2 family. Component of the cytochrome c oxidase (complex IV, CIV), a multisubunit enzyme composed of 14 subunits. The complex is composed of a catalytic core of 3 subunits MT-CO1, MT-CO2 and MT-CO3, encoded in the mitochondrial DNA, and 11 supernumerary subunits COX4I, COX5A, COX5B, COX6A, COX6B, COX6C, COX7A, COX7B, COX7C, COX8 and NDUFA4, which are encoded in the nuclear genome. The complex exists as a monomer or a dimer and forms supercomplexes (SCs) in the inner mitochondrial membrane with NADH-ubiquinone oxidoreductase (complex I, CI) and ubiquinol-cytochrome c oxidoreductase (cytochrome b-c1 complex, complex III, CIII), resulting in different assemblies (supercomplex SCI(1)III(2)IV(1) and megacomplex MCI(2)III(2)IV(2)). Found in a complex with TMEM177, COA6, COX18, COX20, SCO1 and SCO2. Interacts with TMEM177 in a COX20-dependent manner. Interacts with COX20. Interacts with COX16. Cu cation is required as a cofactor.

Its subcellular location is the mitochondrion inner membrane. It catalyses the reaction 4 Fe(II)-[cytochrome c] + O2 + 8 H(+)(in) = 4 Fe(III)-[cytochrome c] + 2 H2O + 4 H(+)(out). Component of the cytochrome c oxidase, the last enzyme in the mitochondrial electron transport chain which drives oxidative phosphorylation. The respiratory chain contains 3 multisubunit complexes succinate dehydrogenase (complex II, CII), ubiquinol-cytochrome c oxidoreductase (cytochrome b-c1 complex, complex III, CIII) and cytochrome c oxidase (complex IV, CIV), that cooperate to transfer electrons derived from NADH and succinate to molecular oxygen, creating an electrochemical gradient over the inner membrane that drives transmembrane transport and the ATP synthase. Cytochrome c oxidase is the component of the respiratory chain that catalyzes the reduction of oxygen to water. Electrons originating from reduced cytochrome c in the intermembrane space (IMS) are transferred via the dinuclear copper A center (CU(A)) of subunit 2 and heme A of subunit 1 to the active site in subunit 1, a binuclear center (BNC) formed by heme A3 and copper B (CU(B)). The BNC reduces molecular oxygen to 2 water molecules using 4 electrons from cytochrome c in the IMS and 4 protons from the mitochondrial matrix. This Leggadina forresti (Forrest's mouse) protein is Cytochrome c oxidase subunit 2 (MT-CO2).